Consider the following 266-residue polypeptide: Hydroxyacylglutathione hydrolase (266 aa).

Zn(2+) contacts are provided by H53, H55, D57, H58, H118, D140, and H178.

This sequence belongs to the metallo-beta-lactamase superfamily. Glyoxalase II family. As to quaternary structure, monomer. Requires Zn(2+) as cofactor.

It catalyses the reaction an S-(2-hydroxyacyl)glutathione + H2O = a 2-hydroxy carboxylate + glutathione + H(+). The protein operates within secondary metabolite metabolism; methylglyoxal degradation; (R)-lactate from methylglyoxal: step 2/2. Functionally, thiolesterase that catalyzes the hydrolysis of S-D-lactoyl-glutathione to form glutathione and D-lactic acid. The chain is Hydroxyacylglutathione hydrolase from Cupriavidus metallidurans (strain ATCC 43123 / DSM 2839 / NBRC 102507 / CH34) (Ralstonia metallidurans).